The sequence spans 1173 residues: MRDLLLGTTIPSYFSWLGLFPRFLVWFGFLKASFFCSSRNQSAGESGRRLKMKRAREDVHTDTQKRKPEVSSRGETNKLPRTIDALTYLKAVKDIFHDNKEKYESFLELMKEFKAQTIDTNGVIERIKVLFKGYRDLLLGFNTFLPKGYKITLLPEEEKPKIRVDFKDAIGFVTKIKTRFGDDEHAYKRFLDILNLYRKEKKSISEVYEEVTMLFKGHEDLLMEFVNFLPNCPESAPSTKNAVPRHKGTATTAMHSDKKRKQRCKLEDYSGHSDQREDGDENLVTCSADSPVGEGQPGYFRDYENREDTETDTADRTEKSAASGSQDIGNHKSTTKYVGTPINELDLSECTQCTPSYRLLPKDYAVEIPSYRNTLGKKTLNDHLVSVTSGSEDYSFSHMRKNQYEESLFRCEDDRYEMDMLLGSVSSAIKQVEILLEKMNNNTISVDSTICIEKHLSAMNLRCIERLYGDNGLDVMDLLKKNMHSALPVILTRLKQKQEEWARCHSDFQKVWAEVYAKNHHKSLDHRSFYFKQQDSKNLSTKCLVAEVKDISEKKHQEDLLQAIAVRVMPLFTPDLEFNYCDTQIHEDLYLLIKYYCEEICATEQSDKVMKLWITFLEPIFGILSRSQDNLALEDVSKLKNNRELQDACLAVKETASGSNRKHPISPKRLSKDNTKMQGSSSREDVSANIKVKTAQPDKLQDDAAMTNEVIQSSKFVSPKNDQIMEDEGNHMVNAASVEKHELEEGELSPTASREQSNFEVNGQNAFKPLQKVTDNVRSNKDKQSCDKKGAKNKTRAEDDKQENCHKLSENNKTASEMLVSGTKVSCHEENNRVMNCNGRGSVAGEMANGNQGEDGSFAFSERFLQTVKPVAKHLSWPLQASETCSQNDSQVFYGNDSYYVLFRLHQMLYERIQTAKKHSEKKWKAADNTTPDSYPRFMDALYNLLDGSIDNTKFEDECRAIFGAQSYVLFTLDKLVQKFVKHLHSVASDETDTKLLQLHAYENYRKPGKFFDLVYHENACALLHEANIYRIRYSSEGTRLSIQLMNSGNNQLEVMGVAMEPAFADYLQNKCLKSVNDEENHGLFLNRNKKKFTSLDESRGMPVAMERLNIINEMECRMACSSSKVKYVANTSDLLYRSKQGKPNSRVSEILKQRRISRFHIMLNCRLCALPL.

The disordered stretch occupies residues 40-75 (NQSAGESGRRLKMKRAREDVHTDTQKRKPEVSSRGE). Residues 55–75 (AREDVHTDTQKRKPEVSSRGE) show a composition bias toward basic and acidic residues. 2 consecutive PAH domains span residues 79 to 148 (LPRT…LPKG) and 162 to 232 (IRVD…LPNC). 3 disordered regions span residues 236–337 (APST…TTKY), 655–697 (TASG…TAQP), and 740–813 (KHEL…ENNK). Basic and acidic residues-rich tracts occupy residues 264–276 (CKLEDYSGHSDQR) and 301–319 (RDYENREDTETDTADRTEK). Residues 320-337 (SAASGSQDIGNHKSTTKY) show a composition bias toward polar residues. Positions 750-765 (PTASREQSNFEVNGQN) are enriched in polar residues. Positions 778-810 (RSNKDKQSCDKKGAKNKTRAEDDKQENCHKLSE) are enriched in basic and acidic residues.

Its subcellular location is the nucleus. Acts as a transcriptional repressor. Plays roles in regulating gene expression and genome stability. The chain is Paired amphipathic helix protein Sin3-like 6 (SNL6) from Arabidopsis thaliana (Mouse-ear cress).